A 265-amino-acid polypeptide reads, in one-letter code: 4-hydroxy-tetrahydrodipicolinate reductase (265 aa).

NAD(+) is bound by residues 7-12 (GASGRM), D33, 96-98 (GTT), and 120-123 (AANF). H153 functions as the Proton donor/acceptor in the catalytic mechanism. H154 contributes to the (S)-2,3,4,5-tetrahydrodipicolinate binding site. Catalysis depends on K157, which acts as the Proton donor. Position 163 to 164 (163 to 164 (GT)) interacts with (S)-2,3,4,5-tetrahydrodipicolinate.

This sequence belongs to the DapB family.

It localises to the cytoplasm. It carries out the reaction (S)-2,3,4,5-tetrahydrodipicolinate + NAD(+) + H2O = (2S,4S)-4-hydroxy-2,3,4,5-tetrahydrodipicolinate + NADH + H(+). It catalyses the reaction (S)-2,3,4,5-tetrahydrodipicolinate + NADP(+) + H2O = (2S,4S)-4-hydroxy-2,3,4,5-tetrahydrodipicolinate + NADPH + H(+). Its pathway is amino-acid biosynthesis; L-lysine biosynthesis via DAP pathway; (S)-tetrahydrodipicolinate from L-aspartate: step 4/4. Functionally, catalyzes the conversion of 4-hydroxy-tetrahydrodipicolinate (HTPA) to tetrahydrodipicolinate. This is 4-hydroxy-tetrahydrodipicolinate reductase from Cupriavidus necator (strain ATCC 17699 / DSM 428 / KCTC 22496 / NCIMB 10442 / H16 / Stanier 337) (Ralstonia eutropha).